A 169-amino-acid polypeptide reads, in one-letter code: UPF0251 protein MM_2090 (169 aa).

The protein belongs to the UPF0251 family.

In Methanosarcina mazei (strain ATCC BAA-159 / DSM 3647 / Goe1 / Go1 / JCM 11833 / OCM 88) (Methanosarcina frisia), this protein is UPF0251 protein MM_2090.